A 319-amino-acid polypeptide reads, in one-letter code: MIFYTLEHILTHISFSLVSIGITIFLITLSVDEIIGLYDSSEKGVIGTFLCITGLLVTRWAYSGHFPLSNLYESLLFLSWSFAIIHMFPYFKKQKSYVRTITSSSTIFTQGLVTSGLLSEMQQSEILVPALQSQWLMMHVSMMVLGYAALLCGSLLSVALLVITFRKALRIFSKKKAFLKDSFSFVEIQYRNEPSNVLLSTSFISSKNYYRAQLIQQLDRWSSRIISLGFIFLTIGILSGAVWANEAWGSYWNWDPKETWAFITWTMFAIYLHTRTNPNFQSVNSAIVAFLGFIIIWICYFGVNLLGIGLHSYGSFNLH.

7 helical membrane passes run 9–29, 44–64, 71–91, 143–163, 225–245, 259–273, and 286–306; these read ILTH…LITL, GVIG…AYSG, LYES…FPYF, MVLG…LLVI, IISL…VWAN, TWAF…IYLH, and AIVA…VNLL.

It belongs to the CcmF/CycK/Ccl1/NrfE/CcsA family. May interact with Ccs1.

It is found in the plastid. Its subcellular location is the chloroplast thylakoid membrane. In terms of biological role, required during biogenesis of c-type cytochromes (cytochrome c6 and cytochrome f) at the step of heme attachment. The polypeptide is Cytochrome c biogenesis protein CcsA (Oenothera biennis (German evening primrose)).